A 216-amino-acid chain; its full sequence is Endoplasmic reticulum vesicle protein 25 (216 aa).

An N-terminal signal peptide occupies residues 1–20; the sequence is MASLKSLLSGFLLLAGAAQA. Over 21–185 the chain is Lumenal; the sequence is LKFDLEATSS…TNESTNNRVK (165 aa). One can recognise a GOLD domain in the interval 36-126; it reads RRCIRNFVNK…RRHVELDIDI (91 aa). The helical transmembrane segment at 186–206 threads the bilayer; sequence WFGMATTFLLIALWGWQIMYL. The Cytoplasmic portion of the chain corresponds to 207–216; it reads RAYFRSKHLI.

It belongs to the EMP24/GP25L family.

The protein resides in the endoplasmic reticulum membrane. It is found in the golgi apparatus membrane. Constituent of COPII-coated endoplasmic reticulum-derived transport vesicles. Required for efficient transport of a subset of secretory proteins to the Golgi. Facilitates retrograde transport from the Golgi to the endoplasmic reticulum. This chain is Endoplasmic reticulum vesicle protein 25 (erv-1), found in Neurospora crassa (strain ATCC 24698 / 74-OR23-1A / CBS 708.71 / DSM 1257 / FGSC 987).